The sequence spans 100 residues: Flagellar transcriptional regulator FlhD (100 aa).

It belongs to the FlhD family. As to quaternary structure, homodimer; disulfide-linked. Forms a heterohexamer composed of two FlhC and four FlhD subunits. Each FlhC binds a FlhD dimer, forming a heterotrimer, and a hexamer assembles by dimerization of two heterotrimers.

Its subcellular location is the cytoplasm. Functionally, functions in complex with FlhC as a master transcriptional regulator that regulates transcription of several flagellar and non-flagellar operons by binding to their promoter region. Activates expression of class 2 flagellar genes, including fliA, which is a flagellum-specific sigma factor that turns on the class 3 genes. Also regulates genes whose products function in a variety of physiological pathways. The polypeptide is Flagellar transcriptional regulator FlhD (Ralstonia pickettii (strain 12D)).